Here is a 530-residue protein sequence, read N- to C-terminus: Hyccin 2 (530 aa).

Residues Thr-30 and Thr-306 each carry the phosphothreonine modification. Residues Ser-321 and Ser-341 each carry the phosphoserine modification. The tract at residues 328–404 is disordered; the sequence is RREGAEGLNG…SNESPRDSVV (77 aa). Positions 353–373 are enriched in polar residues; that stretch reads SGASLSSQPHGTKPPSSSQRG. 4 positions are modified to phosphoserine: Ser-430, Ser-442, Ser-444, and Ser-491. The segment at 502 to 530 is disordered; the sequence is EGKELLSPGAPLTKQSRSPSFNMQLISQV. A compositionally biased stretch (polar residues) spans 514-530; sequence TKQSRSPSFNMQLISQV.

This sequence belongs to the Hyccin family. In terms of assembly, component of a phosphatidylinositol 4-kinase (PI4K) complex, composed of PI4KA, EFR3 (EFR3A or EFR3B), TTC7 (TTC7A or TTC7B) and HYCC (HYCC1 or HYCC2). In terms of tissue distribution, expressed in the central nervous system. Expressed at much lower level in oligodendrocytes than in neurons.

Its subcellular location is the cytoplasm. The protein localises to the cytosol. The protein resides in the cell membrane. Component of a complex required to localize phosphatidylinositol 4-kinase (PI4K) to the plasma membrane. The polypeptide is Hyccin 2 (Hycc2) (Mus musculus (Mouse)).